The chain runs to 292 residues: 11-beta-hydroxysteroid dehydrogenase 1 (292 aa).

Topologically, residues A2–Y7 are cytoplasmic. A helical; Signal-anchor for type II membrane protein transmembrane segment spans residues L8–N24. Residues E25–N292 are Lumenal-facing. NADP(+) contacts are provided by residues G41 to S67, T92 to M93, and N119 to I121. N-linked (GlcNAc...) asparagine glycosylation is found at N123 and N162. S170 is a substrate binding site. Catalysis depends on Y183, which acts as the Proton acceptor. Y183–K187 contributes to the NADP(+) binding site. N-linked (GlcNAc...) asparagine glycosylation is present at N207. I218–T222 is a binding site for NADP(+).

The protein belongs to the short-chain dehydrogenases/reductases (SDR) family. Homodimer. Glycosylated. As to expression, expressed in the eye.

The protein localises to the endoplasmic reticulum membrane. It is found in the microsome membrane. It carries out the reaction an 11beta-hydroxysteroid + NADP(+) = an 11-oxosteroid + NADPH + H(+). The enzyme catalyses corticosterone + NADP(+) = 11-dehydrocorticosterone + NADPH + H(+). It catalyses the reaction cortisone + NADPH + H(+) = cortisol + NADP(+). The catalysed reaction is a 7beta-hydroxysteroid + NADP(+) = a 7-oxosteroid + NADPH + H(+). It carries out the reaction 7-oxocholesterol + NADPH + H(+) = 7beta-hydroxycholesterol + NADP(+). The enzyme catalyses chenodeoxycholate + NADP(+) = 7-oxolithocholate + NADPH + H(+). It catalyses the reaction 7-oxolithocholate + NADPH + H(+) = ursodeoxycholate + NADP(+). The catalysed reaction is glycochenodeoxycholate + NADP(+) = 7-oxoglycolithocholate + NADPH + H(+). It carries out the reaction taurochenodeoxycholate + NADP(+) = 7-oxotaurolithocholate + NADPH + H(+). The enzyme catalyses tauroursodeoxycholate + NADP(+) = 7-oxotaurolithocholate + NADPH + H(+). It catalyses the reaction glycoursodeoxycholate + NADP(+) = 7-oxoglycolithocholate + NADPH + H(+). The catalysed reaction is 7-oxopregnenolone + NADPH + H(+) = 7beta-hydroxypregnenolone + NADP(+). It carries out the reaction 3beta,7alpha-dihydroxyandrost-5-en-17-one + NADP(+) = 3beta-hydroxy-5-androstene-7,17-dione + NADPH + H(+). The enzyme catalyses 3beta-hydroxy-5-androstene-7,17-dione + NADPH + H(+) = 3beta,7beta-dihydroxyandrost-5-en-17-one + NADP(+). It catalyses the reaction 3beta-hydroxy-5alpha-androstane-7,17-dione + NADPH + H(+) = 3beta,7beta-dihydroxy-5alpha-androstan-17-one + NADP(+). Its pathway is steroid metabolism. Functionally, controls the reversible conversion of biologically active glucocorticoids such as cortisone to cortisol, and 11-dehydrocorticosterone to corticosterone in the presence of NADP(H). Participates in the corticosteroid receptor-mediated anti-inflammatory response, as well as metabolic and homeostatic processes. Plays a role in the secretion of aqueous humor in the eye, maintaining a normotensive, intraocular environment. Bidirectional in vitro, predominantly functions as a reductase in vivo, thereby increasing the concentration of active glucocorticoids. It has broad substrate specificity, besides glucocorticoids, it accepts other steroid and sterol substrates. It has broad substrate specificity, besides glucocorticoids, it accepts other steroid and sterol substrates. Interconverts 7-oxo- and 7-hydroxy-neurosteroids such as 7-oxopregnenolone and 7beta-hydroxypregnenolone, 7-oxodehydroepiandrosterone (3beta-hydroxy-5-androstene-7,17-dione) and 7beta-hydroxydehydroepiandrosterone (3beta,7beta-dihydroxyandrost-5-en-17-one), among others. Catalyzes the stereo-specific conversion of the major dietary oxysterol, 7-ketocholesterol (7-oxocholesterol), into the more polar 7-beta-hydroxycholesterol metabolite. 7-oxocholesterol is one of the most important oxysterols, it participates in several events such as induction of apoptosis, accumulation in atherosclerotic lesions, lipid peroxidation, and induction of foam cell formation. Mediates the 7-oxo reduction of 7-oxolithocholate mainly to chenodeoxycholate, and to a lesser extent to ursodeoxycholate, both in its free form and when conjugated to glycine or taurine, providing a link between glucocorticoid activation and bile acid metabolism. Catalyzes the synthesis of 7-beta-25-dihydroxycholesterol from 7-oxo-25-hydroxycholesterol in vitro, which acts as a ligand for the G-protein-coupled receptor (GPCR) Epstein-Barr virus-induced gene 2 (EBI2) and may thereby regulate immune cell migration. The polypeptide is 11-beta-hydroxysteroid dehydrogenase 1 (Oryctolagus cuniculus (Rabbit)).